Here is a 363-residue protein sequence, read N- to C-terminus: Carbamoyl phosphate synthase small chain (363 aa).

Positions 1-171 (MEDGTLFAGA…PYRIPGPGPR (171 aa)) are CPSase. Residues Ser-39, Gly-219, and Gly-221 each coordinate L-glutamine. One can recognise a Glutamine amidotransferase type-1 domain in the interval 171-359 (RVVAVDFGAK…LALVDRSAVS (189 aa)). Catalysis depends on Cys-248, which acts as the Nucleophile. Leu-249, Gln-252, Asn-290, Gly-292, and Tyr-293 together coordinate L-glutamine. Residues His-332 and Glu-334 contribute to the active site.

It belongs to the CarA family. In terms of assembly, composed of two chains; the small (or glutamine) chain promotes the hydrolysis of glutamine to ammonia, which is used by the large (or ammonia) chain to synthesize carbamoyl phosphate. Tetramer of heterodimers (alpha,beta)4.

It catalyses the reaction hydrogencarbonate + L-glutamine + 2 ATP + H2O = carbamoyl phosphate + L-glutamate + 2 ADP + phosphate + 2 H(+). It carries out the reaction L-glutamine + H2O = L-glutamate + NH4(+). Its pathway is amino-acid biosynthesis; L-arginine biosynthesis; carbamoyl phosphate from bicarbonate: step 1/1. The protein operates within pyrimidine metabolism; UMP biosynthesis via de novo pathway; (S)-dihydroorotate from bicarbonate: step 1/3. Its function is as follows. Small subunit of the glutamine-dependent carbamoyl phosphate synthetase (CPSase). CPSase catalyzes the formation of carbamoyl phosphate from the ammonia moiety of glutamine, carbonate, and phosphate donated by ATP, constituting the first step of 2 biosynthetic pathways, one leading to arginine and/or urea and the other to pyrimidine nucleotides. The small subunit (glutamine amidotransferase) binds and cleaves glutamine to supply the large subunit with the substrate ammonia. The polypeptide is Carbamoyl phosphate synthase small chain (Symbiobacterium thermophilum (strain DSM 24528 / JCM 14929 / IAM 14863 / T)).